The sequence spans 424 residues: 3-isopropylmalate dehydratase large subunit (424 aa).

The [4Fe-4S] cluster site is built by cysteine 299, cysteine 359, and cysteine 362.

This sequence belongs to the aconitase/IPM isomerase family. LeuC type 2 subfamily. As to quaternary structure, heterodimer of LeuC and LeuD. Requires [4Fe-4S] cluster as cofactor.

It catalyses the reaction (2R,3S)-3-isopropylmalate = (2S)-2-isopropylmalate. It participates in amino-acid biosynthesis; L-leucine biosynthesis; L-leucine from 3-methyl-2-oxobutanoate: step 2/4. Its function is as follows. Catalyzes the isomerization between 2-isopropylmalate and 3-isopropylmalate, via the formation of 2-isopropylmaleate. The polypeptide is 3-isopropylmalate dehydratase large subunit (Hydrogenobaculum sp. (strain Y04AAS1)).